The primary structure comprises 171 residues: MAIPKKLRLFTLYVDGTNHIGKIPSVTLPKVTRKTEDYQGGGMQGAVAVDLGLDGGALDASMVVGGVVEELILKYGGDIDEMRLRFVGEIYSGGTSSLMEVEMRGRITEIDPGEAKQGDDTNHTYAIKNTYYKLSVDDKALLEIDLLNFIYKRDGKNLYPDRIVSALGLGG.

The protein localises to the virion. Forms the virus tail tube. The sequence is that of Major tail tube protein from Serratia marcescens (Serratia marcescens bacteriophage KSP20).